A 281-amino-acid polypeptide reads, in one-letter code: Probable splicing factor, arginine/serine-rich 2 (281 aa).

The region spanning 2–72 (VRVYIGRLPN…ERVILEFPRR (71 aa)) is the RRM 1 domain. Basic and acidic residues-rich tracts occupy residues 78 to 97 (EERS…KGGE) and 168 to 190 (KLQG…DRSR). Disordered stretches follow at residues 78 to 100 (EERS…ERQF) and 168 to 281 (KLQG…SASP). The RRM 2 domain occupies 112 to 186 (FRLVIDNLST…RKLKCTDETR (75 aa)). A compositionally biased stretch (basic residues) spans 191-215 (SRSPRRRSRSRSPTRSRSPPARRRS). The segment covering 216–225 (PGSDRSDRKS) has biased composition (basic and acidic residues). Residues 245 to 254 (RSRSGGRRSR) are compositionally biased toward basic residues.

This sequence belongs to the splicing factor SR family. In terms of processing, extensively phosphorylated on serine residues in the RS domain.

The protein resides in the nucleus. Its function is as follows. Plays a functionally redundant role in spermatogenesis and growth rate control. Required for the development of somatic gonad structures and for progression from larval stage to adulthood. The protein is Probable splicing factor, arginine/serine-rich 2 (rsp-2) of Caenorhabditis elegans.